Reading from the N-terminus, the 65-residue chain is Alpha-like toxin Bom4 (65 aa).

Positions 2–64 (RDAYIAQPEN…VPIRIPGKCH (63 aa)) constitute an LCN-type CS-alpha/beta domain. Intrachain disulfides connect Cys-12–Cys-63, Cys-16–Cys-36, Cys-22–Cys-46, and Cys-26–Cys-48.

It belongs to the long (4 C-C) scorpion toxin superfamily. Sodium channel inhibitor family. Alpha subfamily. As to expression, expressed by the venom gland.

The protein resides in the secreted. Functionally, alpha toxins bind voltage-independently at site-3 of sodium channels (Nav) and inhibit the inactivation of the activated channels, thereby blocking neuronal transmission. This alpha-like toxin is highly toxic to mice and insects. The polypeptide is Alpha-like toxin Bom4 (Buthus occitanus mardochei (Moroccan scorpion)).